A 277-amino-acid chain; its full sequence is Probable endonuclease 4 (277 aa).

The Zn(2+) site is built by H67, H107, E142, D176, H179, H211, D224, H226, and E256.

This sequence belongs to the AP endonuclease 2 family. Requires Zn(2+) as cofactor.

It catalyses the reaction Endonucleolytic cleavage to 5'-phosphooligonucleotide end-products.. In terms of biological role, endonuclease IV plays a role in DNA repair. It cleaves phosphodiester bonds at apurinic or apyrimidinic (AP) sites, generating a 3'-hydroxyl group and a 5'-terminal sugar phosphate. This is Probable endonuclease 4 from Clostridium beijerinckii (strain ATCC 51743 / NCIMB 8052) (Clostridium acetobutylicum).